The following is a 283-amino-acid chain: 4-hydroxy-tetrahydrodipicolinate reductase (283 aa).

NAD(+)-binding positions include 15-20 and 116-118; these read GALGRM and GTT. The Proton donor/acceptor role is filled by H172. A (S)-2,3,4,5-tetrahydrodipicolinate-binding site is contributed by H173. K176 acts as the Proton donor in catalysis. 182–183 lines the (S)-2,3,4,5-tetrahydrodipicolinate pocket; that stretch reads GT.

The protein belongs to the DapB family.

The protein localises to the cytoplasm. The catalysed reaction is (S)-2,3,4,5-tetrahydrodipicolinate + NAD(+) + H2O = (2S,4S)-4-hydroxy-2,3,4,5-tetrahydrodipicolinate + NADH + H(+). The enzyme catalyses (S)-2,3,4,5-tetrahydrodipicolinate + NADP(+) + H2O = (2S,4S)-4-hydroxy-2,3,4,5-tetrahydrodipicolinate + NADPH + H(+). It functions in the pathway amino-acid biosynthesis; L-lysine biosynthesis via DAP pathway; (S)-tetrahydrodipicolinate from L-aspartate: step 4/4. In terms of biological role, catalyzes the conversion of 4-hydroxy-tetrahydrodipicolinate (HTPA) to tetrahydrodipicolinate. This is 4-hydroxy-tetrahydrodipicolinate reductase from Prochlorococcus marinus (strain MIT 9313).